The following is a 442-amino-acid chain: Coiled-coil domain-containing protein 112 (442 aa).

Coiled-coil stretches lie at residues 23–116 and 217–249; these read LEEL…RRIE and LEEK…VDTV. 3 disordered regions span residues 245–272, 289–312, and 392–442; these read KVDT…KKQK, KLAS…QRQS, and EKVE…RQGI. Composition is skewed to basic and acidic residues over residues 256–268 and 294–310; these read KAED…EEQR and LREE…ERQR. Residues 281–400 adopt a coiled-coil conformation; it reads RKSLEMSAKL…KEKVENNVSR (120 aa).

The protein localises to the cytoplasm. It localises to the cytoskeleton. It is found in the microtubule organizing center. Its subcellular location is the centrosome. The protein resides in the centriolar satellite. The protein is Coiled-coil domain-containing protein 112 (Ccdc112) of Mus musculus (Mouse).